The primary structure comprises 124 residues: Small ribosomal subunit protein uS12 (124 aa).

3-methylthioaspartic acid is present on Asp-90.

Belongs to the universal ribosomal protein uS12 family. As to quaternary structure, part of the 30S ribosomal subunit. Contacts proteins S8 and S17. May interact with IF1 in the 30S initiation complex.

With S4 and S5 plays an important role in translational accuracy. Functionally, interacts with and stabilizes bases of the 16S rRNA that are involved in tRNA selection in the A site and with the mRNA backbone. Located at the interface of the 30S and 50S subunits, it traverses the body of the 30S subunit contacting proteins on the other side and probably holding the rRNA structure together. The combined cluster of proteins S8, S12 and S17 appears to hold together the shoulder and platform of the 30S subunit. The protein is Small ribosomal subunit protein uS12 of Wolbachia pipientis wMel.